We begin with the raw amino-acid sequence, 334 residues long: Tetraacyldisaccharide 4'-kinase (334 aa).

60–67 contributes to the ATP binding site; it reads TVGGTGKT.

This sequence belongs to the LpxK family.

The catalysed reaction is a lipid A disaccharide + ATP = a lipid IVA + ADP + H(+). It functions in the pathway glycolipid biosynthesis; lipid IV(A) biosynthesis; lipid IV(A) from (3R)-3-hydroxytetradecanoyl-[acyl-carrier-protein] and UDP-N-acetyl-alpha-D-glucosamine: step 6/6. Its function is as follows. Transfers the gamma-phosphate of ATP to the 4'-position of a tetraacyldisaccharide 1-phosphate intermediate (termed DS-1-P) to form tetraacyldisaccharide 1,4'-bis-phosphate (lipid IVA). In Stutzerimonas stutzeri (strain A1501) (Pseudomonas stutzeri), this protein is Tetraacyldisaccharide 4'-kinase.